Here is a 355-residue protein sequence, read N- to C-terminus: tRNA pseudouridine synthase D (355 aa).

Catalysis depends on Asp84, which acts as the Nucleophile. The TRUD domain occupies 160 to 306 (GVPNYFGLQR…MAHERRILRL (147 aa)).

Belongs to the pseudouridine synthase TruD family.

It catalyses the reaction uridine(13) in tRNA = pseudouridine(13) in tRNA. Its function is as follows. Responsible for synthesis of pseudouridine from uracil-13 in transfer RNAs. The sequence is that of tRNA pseudouridine synthase D from Pseudomonas aeruginosa (strain LESB58).